A 188-amino-acid chain; its full sequence is Inosine triphosphate pyrophosphatase (188 aa).

ITP is bound at residue 12–17 (TGNKNK). Glu40 contributes to the Mg(2+) binding site. ITP is bound by residues Lys52, 68 to 69 (DT), Lys85, 144 to 147 (FGWD), Lys165, and 170 to 171 (HR).

It belongs to the HAM1 NTPase family. In terms of assembly, homodimer. Mg(2+) is required as a cofactor. The cofactor is Mn(2+).

The protein localises to the cytoplasm. It localises to the nucleus. The enzyme catalyses ITP + H2O = IMP + diphosphate + H(+). It carries out the reaction dITP + H2O = dIMP + diphosphate + H(+). The catalysed reaction is XTP + H2O = XMP + diphosphate + H(+). Its function is as follows. Pyrophosphatase that hydrolyzes non-canonical purine nucleotides such as inosine triphosphate (ITP), deoxyinosine triphosphate (dITP) or xanthosine 5'-triphosphate (XTP) to their respective monophosphate derivatives. The enzyme does not distinguish between the deoxy- and ribose forms. Probably excludes non-canonical purines from RNA and DNA precursor pools, thus preventing their incorporation into RNA and DNA and avoiding chromosomal lesions. The sequence is that of Inosine triphosphate pyrophosphatase from Phaeosphaeria nodorum (strain SN15 / ATCC MYA-4574 / FGSC 10173) (Glume blotch fungus).